The following is a 943-amino-acid chain: Glycine dehydrogenase (decarboxylating) (943 aa).

Residue Lys695 is modified to N6-(pyridoxal phosphate)lysine.

Belongs to the GcvP family. As to quaternary structure, the glycine cleavage system is composed of four proteins: P, T, L and H. The cofactor is pyridoxal 5'-phosphate.

It carries out the reaction N(6)-[(R)-lipoyl]-L-lysyl-[glycine-cleavage complex H protein] + glycine + H(+) = N(6)-[(R)-S(8)-aminomethyldihydrolipoyl]-L-lysyl-[glycine-cleavage complex H protein] + CO2. Its function is as follows. The glycine cleavage system catalyzes the degradation of glycine. The P protein binds the alpha-amino group of glycine through its pyridoxal phosphate cofactor; CO(2) is released and the remaining methylamine moiety is then transferred to the lipoamide cofactor of the H protein. This chain is Glycine dehydrogenase (decarboxylating), found in Jannaschia sp. (strain CCS1).